We begin with the raw amino-acid sequence, 295 residues long: Trimeric intracellular cation channel type 1B.1 (295 aa).

The Lumenal portion of the chain corresponds to 1-27; the sequence is MVVPESFQLDQEILLDAGAQLHRLKMY. The helical transmembrane segment at 28–45 threads the bilayer; it reads PYFDVAHYLLMIIEVRDD. Residues 46-56 lie on the Cytoplasmic side of the membrane; sequence LGSAASIFSRK. The chain crosses the membrane as a discontinuously helical span at residues 57–80; sequence HPLSCWLSSMLMCFADAFLANFLL. Over 81 to 89 the chain is Lumenal; that stretch reads GEPVIAPFK. Residues 90–107 traverse the membrane as a helical segment; sequence RHDDIILATIIWYLVFYA. Residues 108–119 lie on the Cytoplasmic side of the membrane; it reads PFDGIYKIAKIT. A helical membrane pass occupies residues 120 to 148; that stretch reads PVKCVLAVMKEVKRAYKVSHGVSHAAKLY. Residues K129 and R133 each contribute to the a 1,2-diacyl-sn-glycero-3-phospho-(1D-myo-inositol-4,5-bisphosphate) site. Topologically, residues 149–150 are lumenal; sequence PN. Residues 151–177 traverse the membrane as a discontinuously helical segment; the sequence is SYIVQVLVGTAKGAGSGIVRTLEQLVR. An a 1,2-diacyl-sn-glycero-3-phospho-(1D-myo-inositol-4,5-bisphosphate)-binding site is contributed by S166. Topologically, residues 178–188 are cytoplasmic; it reads GVWLPTHNELL. Residues 189 to 210 traverse the membrane as a helical segment; that stretch reads RPSFATKACVVAASVLALEKSG. Residues 211–215 are Lumenal-facing; that stretch reads TYLTA. The chain crosses the membrane as a helical span at residues 216–239; sequence PHDLVYLVIVGFFVYFKLSAVILH. Over 240–295 the chain is Cytoplasmic; it reads VTDPFAPIENLFCAIFMGGIWDAVSRALAASRDRRAAGAHSNENGSSISTPEKKDQ. The interval 274 to 295 is disordered; it reads RAAGAHSNENGSSISTPEKKDQ.

The protein belongs to the TMEM38 family. As to quaternary structure, homotrimer; trimerization probably requires binding to phosphatidylinositol 4,5-bisphosphate (PIP2).

Its subcellular location is the endoplasmic reticulum membrane. Its function is as follows. Potassium channel that mediates transmembrane potassium transport. Might be required for maintenance of rapid intracellular calcium release. May act as a counter-ion channel that functions in synchronization with calcium release from intracellular stores. Binds phosphatidylinositol 4,5-bisphosphate (PIP2). This is Trimeric intracellular cation channel type 1B.1 from Caenorhabditis elegans.